The primary structure comprises 611 residues: MAU2 chromatid cohesion factor homolog (611 aa).

TPR repeat units lie at residues 11–46 (YAGLVGLAEGFRTSNPPRIRECIQCLQAILQFNPPP), 91–124 (FEASSILSLVYKDQGQYPLAKQVLRQALEITSGE), 131–164 (FRLFFQLAEVHACDNEFTASVEVLEMGERIAEQC), 371–404 (PILHTLLGLYAMSMNLMEQATTHFNIAFKTADNP), and 490–523 (ACSLVLLGHTFLASGNPQEALNMVLPATQLSGKI). Residues 581–611 (WTGAVSPTKSSTIPPQQSFQTWSQPGPSRLS) are disordered. The span at 585–611 (VSPTKSSTIPPQQSFQTWSQPGPSRLS) shows a compositional bias: polar residues.

Belongs to the SCC4/mau-2 family. As to quaternary structure, component of the cohesin loading complex.

Its subcellular location is the nucleus. It is found in the nucleoplasm. Required for association of the cohesin complex with chromatin during interphase. Plays a role in sister chromatid cohesion and normal progression through prometaphase. In Nematostella vectensis (Starlet sea anemone), this protein is MAU2 chromatid cohesion factor homolog.